Here is a 368-residue protein sequence, read N- to C-terminus: tRNA 2-selenouridine synthase (368 aa).

In terms of domain architecture, Rhodanese spans 15–138 (FLNQHPIMDV…MRQYLIGVIE (124 aa)). The active-site S-selanylcysteine intermediate is the C98.

The protein belongs to the SelU family. In terms of assembly, monomer.

The enzyme catalyses 5-methylaminomethyl-2-thiouridine(34) in tRNA + selenophosphate + (2E)-geranyl diphosphate + H2O + H(+) = 5-methylaminomethyl-2-selenouridine(34) in tRNA + (2E)-thiogeraniol + phosphate + diphosphate. It catalyses the reaction 5-methylaminomethyl-2-thiouridine(34) in tRNA + (2E)-geranyl diphosphate = 5-methylaminomethyl-S-(2E)-geranyl-thiouridine(34) in tRNA + diphosphate. It carries out the reaction 5-methylaminomethyl-S-(2E)-geranyl-thiouridine(34) in tRNA + selenophosphate + H(+) = 5-methylaminomethyl-2-(Se-phospho)selenouridine(34) in tRNA + (2E)-thiogeraniol. The catalysed reaction is 5-methylaminomethyl-2-(Se-phospho)selenouridine(34) in tRNA + H2O = 5-methylaminomethyl-2-selenouridine(34) in tRNA + phosphate. In terms of biological role, involved in the post-transcriptional modification of the uridine at the wobble position (U34) of tRNA(Lys), tRNA(Glu) and tRNA(Gln). Catalyzes the conversion of 2-thiouridine (S2U-RNA) to 2-selenouridine (Se2U-RNA). Acts in a two-step process involving geranylation of 2-thiouridine (S2U) to S-geranyl-2-thiouridine (geS2U) and subsequent selenation of the latter derivative to 2-selenouridine (Se2U) in the tRNA chain. The chain is tRNA 2-selenouridine synthase from Shewanella baltica (strain OS185).